We begin with the raw amino-acid sequence, 166 residues long: Regulator of ribonuclease activity A (166 aa).

This sequence belongs to the RraA family. As to quaternary structure, homotrimer. Binds to both RNA-binding sites in the C-terminal region of Rne and to RhlB.

The protein resides in the cytoplasm. Functionally, globally modulates RNA abundance by binding to RNase E (Rne) and regulating its endonucleolytic activity. Can modulate Rne action in a substrate-dependent manner by altering the composition of the degradosome. Modulates RNA-binding and helicase activities of the degradosome. This Histophilus somni (strain 2336) (Haemophilus somnus) protein is Regulator of ribonuclease activity A.